Consider the following 193-residue polypeptide: Xanthine phosphoribosyltransferase (193 aa).

The xanthine site is built by Leu-20 and Asn-27. 5-phospho-alpha-D-ribose 1-diphosphate is bound at residue 129–133 (ANGKA). Lys-157 provides a ligand contact to xanthine.

The protein belongs to the purine/pyrimidine phosphoribosyltransferase family. Xpt subfamily. As to quaternary structure, homodimer.

It localises to the cytoplasm. The enzyme catalyses XMP + diphosphate = xanthine + 5-phospho-alpha-D-ribose 1-diphosphate. It participates in purine metabolism; XMP biosynthesis via salvage pathway; XMP from xanthine: step 1/1. In terms of biological role, converts the preformed base xanthine, a product of nucleic acid breakdown, to xanthosine 5'-monophosphate (XMP), so it can be reused for RNA or DNA synthesis. This Bifidobacterium adolescentis (strain ATCC 15703 / DSM 20083 / NCTC 11814 / E194a) protein is Xanthine phosphoribosyltransferase.